We begin with the raw amino-acid sequence, 51 residues long: Small ribosomal subunit protein eS31 (51 aa).

C22, C25, C40, and C43 together coordinate Zn(2+). Residues 22-43 (CPRCGPGVFMADHGDRWACGRC) form a C4-type zinc finger.

Belongs to the eukaryotic ribosomal protein eS31 family. Part of the 30S ribosomal subunit. It depends on Zn(2+) as a cofactor.

This is Small ribosomal subunit protein eS31 from Pyrococcus abyssi (strain GE5 / Orsay).